The chain runs to 327 residues: Zinc transport protein ZntB (327 aa).

Topologically, residues 1–273 (MEAIKGSEVN…ARRTYTMSLM (273 aa)) are cytoplasmic. The helical transmembrane segment at 274-294 (AMVFLPSTFLTGLFGVNLGGI) threads the bilayer. Over 295-300 (PGGAWH) the chain is Periplasmic. Residues 301-321 (FGFSMFCILLVVLIGGVTLWL) form a helical membrane-spanning segment. Over 322 to 327 (HRSKWL) the chain is Cytoplasmic.

Belongs to the CorA metal ion transporter (MIT) (TC 1.A.35) family.

The protein localises to the cell inner membrane. The enzyme catalyses Zn(2+)(out) + H(+)(out) = Zn(2+)(in) + H(+)(in). Zinc transporter. Acts as a Zn(2+):proton symporter, which likely mediates zinc ion uptake. The chain is Zinc transport protein ZntB from Citrobacter koseri (strain ATCC BAA-895 / CDC 4225-83 / SGSC4696).